Reading from the N-terminus, the 481-residue chain is MSAEYTCRSTNPWADSSTIYAGLVVNAVLDLDILHEKQKELISLWPILGGTVVQSTKPWSFTCGSNVDFESRTLDETVSTHFPNNWGNMTGPSASTTLDPAIVDAKFLFAIKPAPSTIFRIRVTVLRDATLVCFGITHQVTGAGGCFEVVSAFCDLLANRAIPHFALPPDARGLKLSDHITGGDDNVTSDELGDFEPPEKNWNIGVVKAATMMWRVLIAQFWKTLGLREKLTEKYIHLPGDWVDEVRNQAQKELSSLPESSDVELTRNDIISAWYLKTIHGPSSSSGCDTTPVDFYVAINYKGLLNPNTTGGCSEKGPSAEQQQTQYLHHSVAIFRCMFSAYQLQNDSISSIAWRIRRATLHYKQPSSIKKYVRFVEKNNSNLLVVDIRASNPFSMVGLSSWTTYNYMALDFSGAIGDRKAPQDGVRVTFVNPLALSPISGLTLYTLKDGKGGYVIRTANTKTQWKQLEKSSSMENLFPVL.

Residues His-164 and Asp-411 each act as proton acceptor in the active site.

This sequence belongs to the plant acyltransferase family. In terms of assembly, monomer.

Its function is as follows. Acetyltransferase; part of the gene cluster that mediates the biosynthesis of penifulvin A, a potent insecticidal sesquiterpene that features a [5.5.5.6]dioxafenestrane ring. The first step of the pathway is performed by the sesquiterpene cyclase peniA that generates the angular triquinane scaffold silphinene via cyclization of the linear farnesyl pyrophosphate (FPP). The cytochrome P450 monooxygenase peniB and the flavin-dependent monooxygenase peniC then catalyze a series of oxidation reactions to transform silphinene into penifulvin A. The dioxygenases peniD and peniF, as well as the acetyltransferase peniE, do not seem to be involved in the biosynthesis of penifulvin A. In Penicillium patulum (Penicillium griseofulvum), this protein is Acetyltransferase peniE.